The chain runs to 227 residues: Cytidylate kinase (227 aa).

An ATP-binding site is contributed by 7–15 (GPAGSGKST).

Belongs to the cytidylate kinase family. Type 1 subfamily.

The protein localises to the cytoplasm. The enzyme catalyses CMP + ATP = CDP + ADP. It carries out the reaction dCMP + ATP = dCDP + ADP. This is Cytidylate kinase from Salinibacter ruber (strain DSM 13855 / M31).